Consider the following 354-residue polypeptide: MFDVEPIIADHKDVIHDVVFDYYGRRMATCSSDQTVKIWDEDGQGKWNVTSSWKAHSGSIWRVSWAHPEFGQVVATCSFDRTASVWEEVIGEKVSSTNTPTRRWVRRTTLVDSRTSVTDVEFAPKYLGLLLATASADGIIRIYEAPDIMNLSQWPVQHEISNKLPLSCLSWNTSTYMVTQLLAAGSDEAATPTGKVFLFAYSENSRKCVKIDTVNDITDPVTDVAFAPNAGRTFHMLAVASKDLYIVNLRGVTDATDISKLDIQTIKFSEHNCPVWRVCWNMLATMLISTGDDGCVRLWRMNYNRQWRCAAVLKAEGSGPTYEPAPPTPTLATTASATAKFYKKGTIGNQVPWH.

WD repeat units follow at residues 10-49, 55-96, 112-153, 161-209, 216-259, and 270-309; these read DHKDVIHDVVFDYYGRRMATCSSDQTVKIWDEDGQGKWNV, AHSG…KVSS, DSRT…NLSQ, SNKL…RKCV, DITD…TDIS, and EHNCPVWRVCWNMLATMLISTGDDGCVRLWRMNYNRQWRC.

It belongs to the WD repeat SEC13 family. In terms of assembly, probable component of the nuclear pore complex (NPC). Component of the GATOR complex consisting of mio, Nup44A/Seh1, Im11, Nplr3, Nplr2, Wdr24, Wdr59 and Sec13. Within the GATOR complex, probable component of the GATOR2 subcomplex which is likely composed of mio, Nup44A/Seh1, Wdr24, Wdr59 and Sec13. Interacts with mio. Interacts with Wdr24. The GATOR2 complex associates with unmet in the absence of S-adenosyl-L-methionine; the mio-Wdr24-Nup44A subcomplex is essential and sufficient for this interaction while Wdr59 and Sec13 are dispensable. This association acts as a nutrient sensor to inhibit mTORC1 signaling in the absence of methionine. Expressed in ovarian cysts.

It localises to the nucleus envelope. The protein resides in the lysosome. Its function is as follows. Probable component of the nuclear pore complex (NPC). Involved in maintaining the localization of another nucleoporin Mgtor to the nuclear envelope of early meiotic female germline cells. It is not involved in recruiting the nucleoporins Mgtor, Nup107, Nup153 and FG-containing nucleoporins to the NPC. Functionally, an essential component of the GATOR subcomplex GATOR2 which functions as an activator of the amino acid-sensing branch of the mTORC1 signaling pathway. The two GATOR subcomplexes, GATOR1 and GATOR2, regulate the mTORC1 pathway in order to mediate metabolic homeostasis, female gametogenesis and the response to amino acid limitation and complete starvation. GATOR2 activates the mTORC1 signaling pathway through the inhibition of the GATOR1 subcomplex, controlling the switch to cell proliferation growth under nutrient replete conditions and growth during female oocyte development. This component is required for activating mTORC1 specifically in germline cells to promote cell growth and maintain the oocyte fate, probably influences the organization and/or function of microtubules within ovarian cysts, and promotes accumulation of another GATOR2 complex member mio in germline and somatic tissues. GATOR1 and GATOR2 act at different stages of oogenesis to regulate mTORC1 in order to control meiotic entry and promote oocyte growth and development. After exactly four mitotic cyst divisions, the GATOR1 complex members (Iml1, Nprl2 and Nprl3) down-regulate mTORC1 to slow cellular metabolism and promote the mitotic/meiotic transition. At later stages of oogenesis, the mio and Nup44A components of the GATOR2 complex inhibit GATOR1 and thus activate mTORC1 to promote meiotic progression, and drive oocyte growth and development. In addition to its role in the regulation of the mTORC1 complex, functions independently of mTORC1 to prevent the inappropriate accumulation of autolysosomes in germline tissues. The sequence is that of Nucleoporin seh1 from Drosophila melanogaster (Fruit fly).